Here is a 227-residue protein sequence, read N- to C-terminus: Small ribosomal subunit protein uS3 (227 aa).

Residues 24–94 form the KH type-2 domain; it reads LDEYLEEELG…RVSIEVKELP (71 aa). The interval 207–227 is disordered; the sequence is EEVEDELKELIGKSEDEAEGA.

The protein belongs to the universal ribosomal protein uS3 family. Part of the 30S ribosomal subunit.

In terms of biological role, binds the lower part of the 30S subunit head. The sequence is that of Small ribosomal subunit protein uS3 from Methanopyrus kandleri (strain AV19 / DSM 6324 / JCM 9639 / NBRC 100938).